Reading from the N-terminus, the 641-residue chain is MSDQFTLPLRPLIEERDHQDLLPVEIAQISAQWGSFRDVNEETLRAKIEEEKNKEYTIDDEEGEGASVDLDTTERLDQLYKKRAEITQFAMQAHMEAMFALDFISLLLSKYTPRQAETSMSAFLKQVAPLGSLTAELVNPPPKSEAAVRDAKAVSRGWRLQSFNAAADKLLKSAARLETEVASETRYWSEVLAVKDKGWKVCRLPREGQALGVQYGFLEATPIFRDRGLAALRRSEDGGLILDKGLVPAKAKTVRVRVKNRGVVTGCSKPYRSAVQDSESIEGRILQARDTLYEEELFYELVREARIMGSQGVSTGQNLVQFSVSEDEEVLLDLVDPDVAYADDSETSLEHTVVADALAHSIRILLSYAHRQNRRRRTQPPPPLTQKRRHVPEYLLLRPTMAYLQHSFHVRWLESFLGDVYGVLRAAGLESKFTATPYASVDLAHIDRSVPTVEGLVKQFLLPLESTFSADLITPQTSFNVKTRTNLLVPPFGTHFEIALNMPHYPDVQPPSRIGQHDQVAMMVTHFLLLDIVSTISHGQGQPVKSETKTTPLSWEVTYPHHGELLAVASDGRQKKMKVQLSRSELSVQMFETHGTDSYSRLVGAEGGMLPLPSQSQTWTADAATPHPSLMEFVASVSKSA.

Residues 159 to 186 (RLQSFNAAADKLLKSAARLETEVASETR) are a coiled coil.

Belongs to the Mediator complex subunit 17 family. Component of the Mediator complex.

It is found in the nucleus. Component of the Mediator complex, a coactivator involved in the regulated transcription of nearly all RNA polymerase II-dependent genes. Mediator functions as a bridge to convey information from gene-specific regulatory proteins to the basal RNA polymerase II transcription machinery. Mediator is recruited to promoters by direct interactions with regulatory proteins and serves as a scaffold for the assembly of a functional preinitiation complex with RNA polymerase II and the general transcription factors. In Aspergillus clavatus (strain ATCC 1007 / CBS 513.65 / DSM 816 / NCTC 3887 / NRRL 1 / QM 1276 / 107), this protein is Mediator of RNA polymerase II transcription subunit 17 (srb4).